Reading from the N-terminus, the 259-residue chain is Phosphate import ATP-binding protein PstB 1 (259 aa).

Residues 13 to 254 (IQVRGLEFFY…PSKTQTEDYI (242 aa)) form the ABC transporter domain. 45 to 52 (GPSGCGKS) provides a ligand contact to ATP.

It belongs to the ABC transporter superfamily. Phosphate importer (TC 3.A.1.7) family. The complex is composed of two ATP-binding proteins (PstB), two transmembrane proteins (PstC and PstA) and a solute-binding protein (PstS).

It localises to the cell inner membrane. It catalyses the reaction phosphate(out) + ATP + H2O = ADP + 2 phosphate(in) + H(+). In terms of biological role, part of the ABC transporter complex PstSACB involved in phosphate import. Responsible for energy coupling to the transport system. This is Phosphate import ATP-binding protein PstB 1 from Pseudomonas savastanoi pv. phaseolicola (strain 1448A / Race 6) (Pseudomonas syringae pv. phaseolicola (strain 1448A / Race 6)).